Reading from the N-terminus, the 449-residue chain is Xaa-Pro dipeptidase (449 aa).

Aspartate 246, aspartate 257, histidine 345, glutamate 390, and glutamate 429 together coordinate Mn(2+).

Belongs to the peptidase M24B family. Bacterial-type prolidase subfamily. Mn(2+) serves as cofactor.

It catalyses the reaction Xaa-L-Pro dipeptide + H2O = an L-alpha-amino acid + L-proline. Its function is as follows. Splits dipeptides with a prolyl residue in the C-terminal position. The chain is Xaa-Pro dipeptidase from Yersinia enterocolitica serotype O:8 / biotype 1B (strain NCTC 13174 / 8081).